A 332-amino-acid chain; its full sequence is MAYVKLSEKALKHNLETVSKKAGGSDKIAAVLKDNAYGHGIEGFAKKISRLGIKKAVVRTYEEALKIADFFPYILILSDTPRHDSFHYAINDLDTLQVLEPGTKVHLKIDTGMHRNGIALEEIEKAFELLQKNRAHLTGVFTHFRSADELSSELFWQNEQWQTVKQHVIELIKKYNLQKPLFHAANSAALFRLGCEDDFARIGIALYGYTELDDLYEPPALEPVASLWAQKIASRELKKGSRVGYGGVFEAREDMIISTYDAGYADGIFRFQKEIEDGKILGRVSMDSILLEGEKKEICIFSDAKKMARKLGTISYELLVKMPAHLSRTWID.

Catalysis depends on Lys33, which acts as the Proton acceptor; specific for D-alanine. Lys33 is modified (N6-(pyridoxal phosphate)lysine). Arg115 is a binding site for substrate. Tyr245 (proton acceptor; specific for L-alanine) is an active-site residue. Met286 contributes to the substrate binding site.

This sequence belongs to the alanine racemase family. Pyridoxal 5'-phosphate serves as cofactor.

It catalyses the reaction L-alanine = D-alanine. The protein operates within amino-acid biosynthesis; D-alanine biosynthesis; D-alanine from L-alanine: step 1/1. Functionally, catalyzes the interconversion of L-alanine and D-alanine. May also act on other amino acids. In Nitratiruptor sp. (strain SB155-2), this protein is Alanine racemase (alr).